The sequence spans 504 residues: ATP synthase subunit alpha 2 (504 aa).

169 to 176 (GDRQTGKT) is a binding site for ATP.

Belongs to the ATPase alpha/beta chains family. In terms of assembly, F-type ATPases have 2 components, CF(1) - the catalytic core - and CF(0) - the membrane proton channel. CF(1) has five subunits: alpha(3), beta(3), gamma(1), delta(1), epsilon(1). CF(0) has three main subunits: a(1), b(2) and c(9-12). The alpha and beta chains form an alternating ring which encloses part of the gamma chain. CF(1) is attached to CF(0) by a central stalk formed by the gamma and epsilon chains, while a peripheral stalk is formed by the delta and b chains.

The protein localises to the cell membrane. It carries out the reaction ATP + H2O + 4 H(+)(in) = ADP + phosphate + 5 H(+)(out). Produces ATP from ADP in the presence of a proton gradient across the membrane. The alpha chain is a regulatory subunit. The chain is ATP synthase subunit alpha 2 from Listeria innocua serovar 6a (strain ATCC BAA-680 / CLIP 11262).